A 537-amino-acid polypeptide reads, in one-letter code: Phosphoenolpyruvate carboxykinase (ATP) (537 aa).

The substrate site is built by Arg61, Tyr194, and Lys200. Residues Lys200, His219, and 235 to 243 each bind ATP; that span reads GLSGTGKTT. Residues Lys200 and His219 each contribute to the Mn(2+) site. Asp256 contributes to the Mn(2+) binding site. ATP contacts are provided by Glu284, Arg322, and Thr448. Arg322 lines the substrate pocket.

The protein belongs to the phosphoenolpyruvate carboxykinase (ATP) family. The cofactor is Mn(2+).

Its subcellular location is the cytoplasm. The catalysed reaction is oxaloacetate + ATP = phosphoenolpyruvate + ADP + CO2. It functions in the pathway carbohydrate biosynthesis; gluconeogenesis. Involved in the gluconeogenesis. Catalyzes the conversion of oxaloacetate (OAA) to phosphoenolpyruvate (PEP) through direct phosphoryl transfer between the nucleoside triphosphate and OAA. The sequence is that of Phosphoenolpyruvate carboxykinase (ATP) from Bradyrhizobium sp. (strain ORS 278).